Here is a 279-residue protein sequence, read N- to C-terminus: MYDLTGKHVCYVADCGGIALETSKVLMTKNIAKLAILQSVENQPAIARLQSIKHSTQIFFWTFDVTMARQEMKKYFDEVMVQMDYIDVLINGATLCDERNIDATINTNLTGMMNTVATVLPYMDRKMGGAGGLVVNVTSVIGLDPSPVFCAYSASKFGVIGFTRSLADPLYYTQNGVAVMAVCCGPTKVFVDRELNAFLEYGQTFADRLRRAPCQSTAVCGLNIVTAIERSENGQIWIADKGGLELVTLHWYWHMADQFLSYMQSTDDENQEQFVSGQR.

11-34 is a binding site for NAD(+); the sequence is YVADCGGIALETSKVLMTKNIAKL. Serine 139 is a binding site for substrate. The active-site Proton acceptor is tyrosine 152.

The protein belongs to the short-chain dehydrogenases/reductases (SDR) family.

The sequence is that of Alcohol dehydrogenase-related 31 kDa protein (Adhr) from Drosophila madeirensis (Fruit fly).